Here is a 314-residue protein sequence, read N- to C-terminus: Vacuolar membrane protein SCY_4732 (314 aa).

Residues 32 to 61 are disordered; sequence KPTSSVVSETSSKSLPSLTSSAFSTSSGTT. Residues 93 to 113 traverse the membrane as a helical segment; that stretch reads VYIAVGAVIGAIFISILIWWL. 3 positions are modified to phosphoserine: serine 148, serine 254, and serine 274. The segment at 240–309 is disordered; sequence EERKLNLNRP…PSMFLDDVLN (70 aa). Basic and acidic residues predominate over residues 254 to 269; sequence SPERKEKKINSMEGYH.

The protein belongs to the PRM5 family.

It is found in the vacuole membrane. The sequence is that of Vacuolar membrane protein SCY_4732 from Saccharomyces cerevisiae (strain YJM789) (Baker's yeast).